The chain runs to 711 residues: F-box only protein 34 (711 aa).

4 disordered regions span residues 1-36 (MHLK…VNDE), 249-271 (SESY…EVGE), 337-372 (DTQV…ASQD), and 494-529 (YSQL…GSAE). Residues 10-23 (QKKEHPPEVSRETQ) show a composition bias toward basic and acidic residues. Basic and acidic residues predominate over residues 354–364 (RADRCSPKEDQ). In terms of domain architecture, F-box spans 572–624 (QQYMAFLPHHIMVKIFRLLPTKSLVALKCTCCYFKFIIEYYNIRPADSRWVRD).

Directly interacts with SKP1 and CUL1.

Its function is as follows. Substrate-recognition component of the SCF (SKP1-CUL1-F-box protein)-type E3 ubiquitin ligase complex. The protein is F-box only protein 34 (FBXO34) of Homo sapiens (Human).